A 436-amino-acid polypeptide reads, in one-letter code: Protein TolB homolog (436 aa).

An N-terminal signal peptide occupies residues methionine 1–alanine 27.

It belongs to the TolB family.

It localises to the periplasm. This is Protein TolB homolog from Chlorobium luteolum (strain DSM 273 / BCRC 81028 / 2530) (Pelodictyon luteolum).